Consider the following 191-residue polypeptide: Glycerol-3-phosphate acyltransferase (191 aa).

6 helical membrane-spanning segments follow: residues 7-27 (ILVL…SYIG), 51-71 (KLAV…VMLA), 80-100 (FVFM…WLSF), 115-135 (FIEY…FVIF), 139-159 (SLSS…HYSA), and 161-181 (ESIT…ENIV).

Belongs to the PlsY family. As to quaternary structure, probably interacts with PlsX.

The protein resides in the cell inner membrane. It catalyses the reaction an acyl phosphate + sn-glycerol 3-phosphate = a 1-acyl-sn-glycero-3-phosphate + phosphate. Its pathway is lipid metabolism; phospholipid metabolism. Its function is as follows. Catalyzes the transfer of an acyl group from acyl-phosphate (acyl-PO(4)) to glycerol-3-phosphate (G3P) to form lysophosphatidic acid (LPA). This enzyme utilizes acyl-phosphate as fatty acyl donor, but not acyl-CoA or acyl-ACP. In Ehrlichia canis (strain Jake), this protein is Glycerol-3-phosphate acyltransferase.